A 236-amino-acid polypeptide reads, in one-letter code: Probable pseudouridine-5'-phosphatase YKL033W-A (236 aa).

This sequence belongs to the HAD-like hydrolase superfamily.

The catalysed reaction is XMP + H2O = xanthosine + phosphate. It carries out the reaction psi-UMP + H2O = pseudouridine + phosphate. Functionally, nucleotidase with XMP as the best in vitro substrate. Low catalytic efficiencies of YKL033W-A observed with XMP and other substrates suggest that these could be secondary activities for this protein, and its primary substrate is not yet identified. May possess pseudouridine 5'-phosphatase activity and together with dTTP/UTP pyrophosphatase YOR111W might constitute a pathway for the detoxification of pseudouridine 5'-triphosphate (Psi-UTP) and -monophosphate (Psi-UMP). The protein is Probable pseudouridine-5'-phosphatase YKL033W-A of Saccharomyces cerevisiae (strain ATCC 204508 / S288c) (Baker's yeast).